The primary structure comprises 209 residues: Ribosomal RNA large subunit methyltransferase E (209 aa).

S-adenosyl-L-methionine is bound by residues Gly63, Trp65, Asp83, Asp99, and Asp124. The Proton acceptor role is filled by Lys164.

This sequence belongs to the class I-like SAM-binding methyltransferase superfamily. RNA methyltransferase RlmE family.

Its subcellular location is the cytoplasm. The enzyme catalyses uridine(2552) in 23S rRNA + S-adenosyl-L-methionine = 2'-O-methyluridine(2552) in 23S rRNA + S-adenosyl-L-homocysteine + H(+). In terms of biological role, specifically methylates the uridine in position 2552 of 23S rRNA at the 2'-O position of the ribose in the fully assembled 50S ribosomal subunit. This Shewanella halifaxensis (strain HAW-EB4) protein is Ribosomal RNA large subunit methyltransferase E.